Here is a 470-residue protein sequence, read N- to C-terminus: UDP-N-acetylmuramoylalanine--D-glutamate ligase (470 aa).

121-127 (GTNGKST) is an ATP binding site.

The protein belongs to the MurCDEF family.

Its subcellular location is the cytoplasm. The enzyme catalyses UDP-N-acetyl-alpha-D-muramoyl-L-alanine + D-glutamate + ATP = UDP-N-acetyl-alpha-D-muramoyl-L-alanyl-D-glutamate + ADP + phosphate + H(+). It participates in cell wall biogenesis; peptidoglycan biosynthesis. Functionally, cell wall formation. Catalyzes the addition of glutamate to the nucleotide precursor UDP-N-acetylmuramoyl-L-alanine (UMA). The polypeptide is UDP-N-acetylmuramoylalanine--D-glutamate ligase (Rhizobium johnstonii (strain DSM 114642 / LMG 32736 / 3841) (Rhizobium leguminosarum bv. viciae)).